A 376-amino-acid polypeptide reads, in one-letter code: Glucose-1-phosphate adenylyltransferase (376 aa).

Residues Tyr101, Gly166, 181–182 (EK), and Ser192 contribute to the alpha-D-glucose 1-phosphate site.

This sequence belongs to the bacterial/plant glucose-1-phosphate adenylyltransferase family. Homotetramer.

It carries out the reaction alpha-D-glucose 1-phosphate + ATP + H(+) = ADP-alpha-D-glucose + diphosphate. Its pathway is glycan biosynthesis; glycogen biosynthesis. Involved in the biosynthesis of ADP-glucose, a building block required for the elongation reactions to produce glycogen. Catalyzes the reaction between ATP and alpha-D-glucose 1-phosphate (G1P) to produce pyrophosphate and ADP-Glc. This is Glucose-1-phosphate adenylyltransferase from Bacillus cytotoxicus (strain DSM 22905 / CIP 110041 / 391-98 / NVH 391-98).